A 259-amino-acid polypeptide reads, in one-letter code: UPF0246 protein Avin_11220 (259 aa).

It belongs to the UPF0246 family.

This is UPF0246 protein Avin_11220 from Azotobacter vinelandii (strain DJ / ATCC BAA-1303).